We begin with the raw amino-acid sequence, 2046 residues long: Protein TIC 214 (2046 aa).

Transmembrane regions (helical) follow at residues 18-38, 54-74, 79-99, 125-145, 163-183, and 214-234; these read VSGP…LPFG, LYGI…FLSM, IYAA…YTFC, ILSL…LLAN, ISFM…FINL, and TFSV…PLIF. Disordered stretches follow at residues 278 to 299, 320 to 472, and 1833 to 1898; these read DEDR…EDRS, ARSV…VPRE, and AKDS…EDEI. Composition is skewed to basic and acidic residues over residues 322-335, 344-368, and 378-457; these read SVAE…EHRS, SVAE…RSVA, and AKKD…RSVA. Over residues 1833–1866 the composition is skewed to low complexity; sequence AKDSNANDINAKDSNANDINANDSNAKDSNANDI. Residues 1882-1898 are compositionally biased toward basic and acidic residues; the sequence is NAKDSNADVPKKKEDEI.

Belongs to the TIC214 family. Part of the Tic complex.

Its subcellular location is the plastid. The protein localises to the chloroplast inner membrane. Functionally, involved in protein precursor import into chloroplasts. May be part of an intermediate translocation complex acting as a protein-conducting channel at the inner envelope. This Pinus koraiensis (Korean pine) protein is Protein TIC 214.